We begin with the raw amino-acid sequence, 778 residues long: Endonuclease MutS2 (778 aa).

328–335 contacts ATP; sequence GPNTGGKT. The region spanning 703-778 is the Smr domain; that stretch reads LDLRGKRYEE…GSGCTIANLG (76 aa).

This sequence belongs to the DNA mismatch repair MutS family. MutS2 subfamily. Homodimer. Binds to stalled ribosomes, contacting rRNA.

Functionally, endonuclease that is involved in the suppression of homologous recombination and thus may have a key role in the control of bacterial genetic diversity. In terms of biological role, acts as a ribosome collision sensor, splitting the ribosome into its 2 subunits. Detects stalled/collided 70S ribosomes which it binds and splits by an ATP-hydrolysis driven conformational change. Acts upstream of the ribosome quality control system (RQC), a ribosome-associated complex that mediates the extraction of incompletely synthesized nascent chains from stalled ribosomes and their subsequent degradation. Probably generates substrates for RQC. This chain is Endonuclease MutS2, found in Streptococcus equi subsp. equi (strain 4047).